Reading from the N-terminus, the 152-residue chain is Peptide deformylase (152 aa).

Fe cation is bound by residues C91 and H133. The active site involves E134. Position 137 (H137) interacts with Fe cation.

Belongs to the polypeptide deformylase family. It depends on Fe(2+) as a cofactor.

The enzyme catalyses N-terminal N-formyl-L-methionyl-[peptide] + H2O = N-terminal L-methionyl-[peptide] + formate. Its function is as follows. Removes the formyl group from the N-terminal Met of newly synthesized proteins. Requires at least a dipeptide for an efficient rate of reaction. N-terminal L-methionine is a prerequisite for activity but the enzyme has broad specificity at other positions. This chain is Peptide deformylase, found in Wigglesworthia glossinidia brevipalpis.